The sequence spans 207 residues: Large ribosomal subunit protein uL4 (207 aa).

Positions 48–75 (THAVKNRSAVSGGGRKPWKQKGTGRARA) are disordered.

Belongs to the universal ribosomal protein uL4 family. As to quaternary structure, part of the 50S ribosomal subunit.

One of the primary rRNA binding proteins, this protein initially binds near the 5'-end of the 23S rRNA. It is important during the early stages of 50S assembly. It makes multiple contacts with different domains of the 23S rRNA in the assembled 50S subunit and ribosome. Its function is as follows. Forms part of the polypeptide exit tunnel. The sequence is that of Large ribosomal subunit protein uL4 from Leuconostoc citreum (strain KM20).